The sequence spans 61 residues: Early E3 6.4 kDa protein (61 aa).

A disordered region spans residues 1 to 25; that stretch reads MGNAGPLKLHTITKPGTIPYPPHGS.

This Homo sapiens (Human) protein is Early E3 6.4 kDa protein.